The chain runs to 323 residues: MFEQEQWQPTANVETLFARAKIINNIRRFFTDRGVLEVETPILSEFGVTDVHLSTFSTEFVAPQAERSKTLWLNTSPEYHMKRLLAAGTGAIFQLCHVFRNEEAGSRHNPEFTMLEWYRPHFDMYRLINEVDDLLQQILDCEPAESMSYQFAFQEFVGVDPLSAERPILVELARKYNFMCDLDEDRDTLLQFLFSTVVEPKIGQERPVAVYHFPATQAALAQISSEDHRVAERFEFYYKGLELANGFHELTDHREQLHRFEQDNVQRAKLALPQREIDRRLLGALQAGVPNTSGVALGVDRLVMIALDKKRIEEVMAFAINNA.

76-78 contributes to the substrate binding site; the sequence is SPE. ATP is bound by residues 100–102 and N109; that span reads RNE. Substrate is bound at residue Y118. 242 to 243 contributes to the ATP binding site; the sequence is EL. E249 contacts substrate. G298 contacts ATP.

This sequence belongs to the class-II aminoacyl-tRNA synthetase family. EpmA subfamily. As to quaternary structure, homodimer.

The catalysed reaction is D-beta-lysine + L-lysyl-[protein] + ATP = N(6)-((3R)-3,6-diaminohexanoyl)-L-lysyl-[protein] + AMP + diphosphate + H(+). In terms of biological role, with EpmB is involved in the beta-lysylation step of the post-translational modification of translation elongation factor P (EF-P). Catalyzes the ATP-dependent activation of (R)-beta-lysine produced by EpmB, forming a lysyl-adenylate, from which the beta-lysyl moiety is then transferred to the epsilon-amino group of a conserved specific lysine residue in EF-P. This Actinobacillus succinogenes (strain ATCC 55618 / DSM 22257 / CCUG 43843 / 130Z) protein is Elongation factor P--(R)-beta-lysine ligase.